The sequence spans 915 residues: Phototropin-2 (915 aa).

A compositionally biased stretch (pro residues) spans 1 to 10; the sequence is MERPRAPPSP. 2 disordered regions span residues 1–62 and 84–118; these read MERP…EFQD and DDGI…GAFP. S9 and S22 each carry phosphoserine. Polar residues predominate over residues 27 to 43; it reads NPSSGKETHGSTSSSSK. Residues 93–107 show a composition bias toward basic and acidic residues; it reads SEVERSKNMSRRSSE. Positions 120 to 193 constitute a PAS 1 domain; the sequence is VSQELKTALS…AKIRDCVKNG (74 aa). Residue S121 is modified to Phosphoserine. N169 lines the FMN pocket. C170 is subject to S-4a-FMN cysteine. Positions 171, 174, 187, 202, 212, 233, and 238 each coordinate FMN. Residues 194-248 form the PAC 1 domain; the sequence is KSYCGRLLNYKKDGTPFWNLLTVTPIKDDQGNTIKFIGMQVEVSKYTEGVNDKAL. The segment at 281–344 is disordered; sequence HRKSQVQESV…KSSNNRHEDL (64 aa). 2 stretches are compositionally biased toward polar residues: residues 286 to 310 and 325 to 337; these read VQES…GRQT and RVST…LKSS. S364 is modified (phosphoserine). Residues 376 to 449 enclose the PAS 2 domain; sequence QGIDLATTLE…QKIRDAIRDQ (74 aa). N425 serves as a coordination point for FMN. An S-4a-FMN cysteine modification is found at C426. 7 residues coordinate FMN: R427, Q430, R443, N458, N468, F470, and Q489. The 55-residue stretch at 450–504 folds into the PAC 2 domain; sequence REITVQLINYTKSGKKFWNLFHLQPMRDQKGELQYFIGVQLDGSDHVEPLQNRLS. The Protein kinase domain maps to 577 to 864; it reads FKPIKPLGSG…ANEIKQHAFF (288 aa). Residues 583–591 and K606 contribute to the ATP site; that span reads LGSGDTGSV. D702 functions as the Proton acceptor in the catalytic mechanism. The interval 720 to 774 is activation loop; that stretch reads DFDLSFMTTCTPQLIIPAAPSKRRRSKSQPLPTFVAEPSTQSNSFVGTEEYIAPE.

It belongs to the protein kinase superfamily. AGC Ser/Thr protein kinase family. In terms of assembly, homodimer. Interacts with PKS1, PKS2, RPT3 and PHOT1. Associates with CBC1 and CBC2. Binds to BHP. The cofactor is FMN. Autophosphorylated in response to blue light irradiation. In terms of processing, 2 molecules of FMN bind covalently to cysteines after exposure to blue light and are reversed in the dark. In terms of tissue distribution, expressed in leaves, stems and flowers, and to a lower extent in roots. Present in guard cells (at protein level).

Its subcellular location is the cell membrane. The catalysed reaction is L-seryl-[protein] + ATP = O-phospho-L-seryl-[protein] + ADP + H(+). The enzyme catalyses L-threonyl-[protein] + ATP = O-phospho-L-threonyl-[protein] + ADP + H(+). Its activity is regulated as follows. Autophosphorylation is inhibited by staurosporine, but not by tyrphostin 9, sphingosine, GW5074 and BML-265. Protein kinase that acts as a blue light photoreceptor in a signal-transduction pathway for photo-induced movements. Triggers the phosphorylation of AHA1 and AHA2 C-terminal penultimate Thr in guard cells to activate them and induce stomatal opening in response to blue light (BL). Also phosphorylates BLUS1, a kinase involved in stomatal opening. Mediates calcium spiking of extra- and intracellular origins in response to blue light. Involved in hypocotyl phototropism. Contributes to the chloroplast accumulation in low blue light and mediates their translocation (avoidance response) at high fluence. Regulates stomata opening and photomorphogenesis response of leaf tissue. Not involved in hypocotyl elongation inhibition, anthocyanin accumulation or cotyledon opening. This is Phototropin-2 from Arabidopsis thaliana (Mouse-ear cress).